A 239-amino-acid chain; its full sequence is Protein G1-like8 (239 aa).

2 disordered regions span residues 1 to 35 (MEGG…RYES) and 149 to 239 (KARG…ATRV). Over residues 9 to 29 (DAQAQAQPVAQAPPAMQPMQQ) the composition is skewed to low complexity. In terms of domain architecture, ALOG spans 32–159 (RYESQKRRDW…ARGIPYEKKK (128 aa)). Residues 157–161 (KKKRK) carry the Nuclear localization signal motif. A compositionally biased stretch (pro residues) spans 167–178 (QPPPQPPLPPQH). Low complexity-rich tracts occupy residues 179 to 215 (QPGA…ATSQ) and 223 to 239 (TTTT…ATRV).

The protein belongs to the plant homeotic and developmental regulators ALOG protein family.

It is found in the nucleus. In terms of biological role, probable transcription regulator that acts as a developmental regulator by promoting cell growth in response to light. The sequence is that of Protein G1-like8 from Oryza sativa subsp. indica (Rice).